Consider the following 261-residue polypeptide: Transmembrane and immunoglobulin domain-containing protein 1 (261 aa).

The N-terminal stretch at 1–27 is a signal peptide; the sequence is MAQKTSGLIQRCRFLLLMILFLPHVMT. One can recognise an Ig-like C2-type 1 domain in the interval 28 to 114; sequence SSVLSVNGKT…LQRNQSVSIS (87 aa). The Extracellular segment spans residues 28–219; the sequence is SSVLSVNGKT…IVKDKGSTVP (192 aa). Cys-54 and Cys-103 are disulfide-bonded. Asn-83, Asn-108, Asn-118, and Asn-189 each carry an N-linked (GlcNAc...) asparagine glycan. One can recognise an Ig-like C2-type 2 domain in the interval 122–208; it reads PPLLSGNDFQ…LIETKTKDFH (87 aa). Cys-143 and Cys-194 are joined by a disulfide. A helical membrane pass occupies residues 220–240; sequence IEPIIAACVVVFLTLVFGVIA. Topologically, residues 241 to 261 are cytoplasmic; the sequence is RRKRIMKLCRKDQGPQCRTAL.

Homodimer. In terms of processing, N-glycosylated.

Its subcellular location is the cell membrane. The protein localises to the cytoplasm. May control cell-cell adhesion, cell migration and proliferation, cell morphology, and protects renal epithelial cells from oxidative cell injury to promote cell survival. This Bos taurus (Bovine) protein is Transmembrane and immunoglobulin domain-containing protein 1.